The following is an 87-amino-acid chain: Cytochrome c5 (87 aa).

Cys19, Cys22, His23, and Met63 together coordinate heme. Cys69 and Cys72 are joined by a disulfide.

The protein belongs to the cytochrome c family. Homodimer. In terms of processing, binds 1 heme group per subunit.

Its function is as follows. It is unreactive with cytochrome c reductase or oxidase but seems to function as an intermediate in nitrate respiration of facultative anaerobic pseudmonads. The sequence is that of Cytochrome c5 from Ectopseudomonas mendocina (Pseudomonas mendocina).